The sequence spans 309 residues: Tagatose-6-phosphate kinase (309 aa).

This sequence belongs to the carbohydrate kinase PfkB family. LacC subfamily.

It carries out the reaction D-tagatofuranose 6-phosphate + ATP = D-tagatofuranose 1,6-bisphosphate + ADP + H(+). It functions in the pathway carbohydrate metabolism; D-tagatose 6-phosphate degradation; D-glyceraldehyde 3-phosphate and glycerone phosphate from D-tagatose 6-phosphate: step 1/2. The protein is Tagatose-6-phosphate kinase of Streptococcus pyogenes serotype M12 (strain MGAS2096).